The primary structure comprises 610 residues: Elongation factor 4 (610 aa).

One can recognise a tr-type G domain in the interval 12 to 194 (EKIRNFSIIA…QIVEKVPAPQ (183 aa)). GTP-binding positions include 24 to 29 (DHGKST) and 141 to 144 (NKID).

The protein belongs to the TRAFAC class translation factor GTPase superfamily. Classic translation factor GTPase family. LepA subfamily.

The protein localises to the cell membrane. The catalysed reaction is GTP + H2O = GDP + phosphate + H(+). Its function is as follows. Required for accurate and efficient protein synthesis under certain stress conditions. May act as a fidelity factor of the translation reaction, by catalyzing a one-codon backward translocation of tRNAs on improperly translocated ribosomes. Back-translocation proceeds from a post-translocation (POST) complex to a pre-translocation (PRE) complex, thus giving elongation factor G a second chance to translocate the tRNAs correctly. Binds to ribosomes in a GTP-dependent manner. The chain is Elongation factor 4 from Streptococcus thermophilus (strain ATCC BAA-250 / LMG 18311).